Here is a 372-residue protein sequence, read N- to C-terminus: Fatty acid 2-hydroxylase (372 aa).

Residues 8–86 (AASFSPSEVQ…LEQYYVGELR (79 aa)) enclose the Cytochrome b5 heme-binding domain. Residues H43 and H69 each coordinate heme. The next 2 membrane-spanning stretches (helical) occupy residues 168 to 188 (VWYSVPIIWVPLVLYLSWSYY) and 213 to 233 (SMFPGLFMLGTFLWSLIEYLI). The 143-residue stretch at 219–361 (FMLGTFLWSL…TKLWDYCFHT (143 aa)) folds into the Fatty acid hydroxylase domain. Residues H234, H239, H257, H260, and H261 each contribute to the Zn(2+) site. A run of 2 helical transmembrane segments spans residues 268 to 288 (SRLVFPPVPASLVIGVFYLCM) and 290 to 310 (LILPEAVGGTVFAGGLLGYVL). Zn(2+) contacts are provided by H315, H319, H336, H339, and H340.

It belongs to the sterol desaturase family. SCS7 subfamily. Zn(2+) serves as cofactor. Detected in differentiating cultured keratinocytes (at protein level). Detected in epidermis and cultured keratinocytes. Highly expressed in brain and colon. Detected at lower levels in testis, prostate, pancreas and kidney.

Its subcellular location is the endoplasmic reticulum membrane. The protein localises to the microsome membrane. The enzyme catalyses a 1,2-saturated fatty acid + 2 Fe(II)-[cytochrome b5] + O2 + 2 H(+) = a (R)-2-hydroxy fatty acid + 2 Fe(III)-[cytochrome b5] + H2O. It catalyses the reaction hexadecanoate + 2 Fe(II)-[cytochrome b5] + O2 + 2 H(+) = (R)-2-hydroxyhexadecanoate + 2 Fe(III)-[cytochrome b5] + H2O. The catalysed reaction is octadecanoate + 2 Fe(II)-[cytochrome b5] + O2 + 2 H(+) = (R)-2-hydroxyoctadecanoate + 2 Fe(III)-[cytochrome b5] + H2O. It carries out the reaction docosanoate + 2 Fe(II)-[cytochrome b5] + O2 + 2 H(+) = 2-hydroxydocosanoate + 2 Fe(III)-[cytochrome b5] + H2O. The enzyme catalyses tetracosanoate + 2 Fe(II)-[cytochrome b5] + O2 + 2 H(+) = (R)-2-hydroxytetracosanoate + 2 Fe(III)-[cytochrome b5] + H2O. The protein operates within lipid metabolism; fatty acid metabolism. Its pathway is sphingolipid metabolism; galactosylceramide biosynthesis. Functionally, catalyzes the hydroxylation of free fatty acids at the C-2 position to produce 2-hydroxy fatty acids, which are building blocks of sphingolipids and glycosphingolipids common in neural tissue and epidermis. FA2H is stereospecific for the production of (R)-2-hydroxy fatty acids. Plays an essential role in the synthesis of galactosphingolipids of the myelin sheath. Responsible for the synthesis of sphingolipids and glycosphingolipids involved in the formation of epidermal lamellar bodies critical for skin permeability barrier. Participates in the synthesis of glycosphingolipids and a fraction of type II wax diesters in sebaceous gland, specifically regulating hair follicle homeostasis. Involved in the synthesis of sphingolipids of plasma membrane rafts, controlling lipid raft mobility and trafficking of raft-associated proteins. This chain is Fatty acid 2-hydroxylase, found in Homo sapiens (Human).